The following is a 314-amino-acid chain: Malate dehydrogenase (314 aa).

Residues 11 to 16 (GSGNIG) and Asp-35 contribute to the NAD(+) site. Substrate is bound by residues Arg-84 and Arg-90. Residues Asn-97 and 120–122 (ITN) each bind NAD(+). Substrate is bound by residues Asn-122 and Arg-153. The active-site Proton acceptor is the His-177.

The protein belongs to the LDH/MDH superfamily. MDH type 3 family.

The enzyme catalyses (S)-malate + NAD(+) = oxaloacetate + NADH + H(+). Its function is as follows. Catalyzes the reversible oxidation of malate to oxaloacetate. This chain is Malate dehydrogenase, found in Rickettsia conorii (strain ATCC VR-613 / Malish 7).